Here is a 1194-residue protein sequence, read N- to C-terminus: ATP-dependent RNA helicase DHX30 (1194 aa).

Over residues 1-10 the composition is skewed to basic and acidic residues; it reads MFTLDSFRKD. A disordered region spans residues 1–27; it reads MFTLDSFRKDRTQHRQRQCKLPPPRLP. S6 carries the post-translational modification Phosphoserine. The DRBM domain occupies 53–121; the sequence is PKNLLNSVIG…QAAAAACQLF (69 aa). Residues 153 to 200 form a disordered region; it reads WWRPEPTMPPTSWRQLNPENIRPAGTGGLSRSLGREEEEDEEEELEEG. Residues 188–200 are compositionally biased toward acidic residues; that stretch reads EEEEDEEEELEEG. 2 positions are modified to phosphoserine: S226 and S380. The Helicase ATP-binding domain occupies 444 to 612; that stretch reads LSAIEQHPVV…FGGCPVIKVP (169 aa). An ATP-binding site is contributed by 457-464; sequence GDTGCGKT. The DEAH box signature appears at 559-562; sequence DEVH. One can recognise a Helicase C-terminal domain in the interval 654–827; that stretch reads LVTDLVLHID…NLVLQAKIHM (174 aa).

It belongs to the DEAD box helicase family. DEAH subfamily. Identified in a complex with TFAM and SSBP1. Interacts (via N-terminus) with ZC3HAV1 (via N-terminal domain) in an RNA-independent manner. Found in a complex with GRSF1, DDX28, FASTKD2 and FASTKD5.

It localises to the cytoplasm. Its subcellular location is the mitochondrion. The protein resides in the mitochondrion matrix. The protein localises to the mitochondrion nucleoid. It catalyses the reaction ATP + H2O = ADP + phosphate + H(+). RNA-dependent helicase. Plays an important role in the assembly of the mitochondrial large ribosomal subunit. Associates with mitochondrial DNA. Required for optimal function of the zinc-finger antiviral protein ZC3HAV1. Involved in nervous system development and differentiation through its involvement in the up-regulation of a number of genes which are required for neurogenesis, including GSC, NCAM1, neurogenin, and NEUROD. In Rattus norvegicus (Rat), this protein is ATP-dependent RNA helicase DHX30 (Dhx30).